We begin with the raw amino-acid sequence, 513 residues long: MVRLFRSGSNPKEIDISQPNSLVHKVHVDLDLNWSSGGETSFEIQEKLGEGSFGSVYRAIHKSSNTSIAIKEFEIFEANDVEPISKEIQILKKCNNPYVVSYFGSIMLKNKYWILMDYCSLSSFNDIMQSIGKTFKEKEISLILQQSLLGLVYLHSKQIIHRDIKSANILLDETGQVKIADFGVSQQIQSTFSKGSIAGTPYWMAPEILNQTDYNNKIDVWSLGIVAIELADGEPPLSEVNPMRAMYMIGRRPPPTFKDPKKWSPEFVSFVDKCLTKDINERWSPSQLLDHPFIKSAKPDALKELTQMAIKLKSKKRKSIGPSVSPKQQPNDNNNNNNNNKPQFLSKLLNNNSNSSNDIGETTSGSVIYKPNVFSGSIDTGSVVIHNTITSNNNDSGSVVLNSNTVINRSKPLPPPPSYESVILNDKLKQQQQQQQQSNQQTTTTTTKQNTIKNKFNTISNTIKCNTILVQDKTLEIIQKTPMKNLDERNQKIVLYSTLGLILVLSVFFKFFK.

The Protein kinase domain occupies 42–294; sequence FEIQEKLGEG…PSQLLDHPFI (253 aa). Residues 48–56 and lysine 71 contribute to the ATP site; that span reads LGEGSFGSV. Aspartate 163 (proton acceptor) is an active-site residue. The segment at 313–358 is disordered; the sequence is KSKKRKSIGPSVSPKQQPNDNNNNNNNNKPQFLSKLLNNNSNSSND. Low complexity predominate over residues 331–357; that stretch reads NDNNNNNNNNKPQFLSKLLNNNSNSSN. Residues 493–512 form a helical membrane-spanning segment; that stretch reads IVLYSTLGLILVLSVFFKFF.

This sequence belongs to the protein kinase superfamily. STE Ser/Thr protein kinase family. STE20 subfamily. The cofactor is Mg(2+).

The protein localises to the membrane. The catalysed reaction is L-seryl-[protein] + ATP = O-phospho-L-seryl-[protein] + ADP + H(+). It carries out the reaction L-threonyl-[protein] + ATP = O-phospho-L-threonyl-[protein] + ADP + H(+). The chain is Serine/threonine-protein kinase pakH (pakH-1) from Dictyostelium discoideum (Social amoeba).